The chain runs to 330 residues: MRVLAIESSCDETAVAIVEDGKLLSSVLSSQVNIHRKYGGVVPEIAARKHLENILFLLDEALDRASLKIDDIDVFAATQGPGLVGSLLVGLSLAKGLSISLNKPFVAVNHLIGHIYANFLSFPDLEYPFLVLLVSGGHTEILLAEDWNNFKRIGKTRDDAAGEAFDKVARLLGLGYPGGPEVELAARNGNPIYRFPRALNEKGNFDFSFSGLKTSVLYFLKNNPEARIEDVAAAFQEAVIDSLLTKTFAAAKTYGINKIVFAGGVAANTRLRERANEIAKEKDINIYFPPIEFCTDNAAMIAMVAYEKAKRGIFSPIDTNAIPYLSIVSL.

Residues histidine 110 and histidine 114 each coordinate Fe cation. Residues 133–137 (LVSGG), aspartate 166, glycine 179, and asparagine 268 each bind substrate. A Fe cation-binding site is contributed by aspartate 296.

It belongs to the KAE1 / TsaD family. The cofactor is Fe(2+).

The protein resides in the cytoplasm. It catalyses the reaction L-threonylcarbamoyladenylate + adenosine(37) in tRNA = N(6)-L-threonylcarbamoyladenosine(37) in tRNA + AMP + H(+). In terms of biological role, required for the formation of a threonylcarbamoyl group on adenosine at position 37 (t(6)A37) in tRNAs that read codons beginning with adenine. Is involved in the transfer of the threonylcarbamoyl moiety of threonylcarbamoyl-AMP (TC-AMP) to the N6 group of A37, together with TsaE and TsaB. TsaD likely plays a direct catalytic role in this reaction. This is tRNA N6-adenosine threonylcarbamoyltransferase from Kosmotoga olearia (strain ATCC BAA-1733 / DSM 21960 / TBF 19.5.1).